The following is a 295-amino-acid chain: G1/S-specific cyclin-D1 (295 aa).

In terms of domain architecture, Cyclin N-terminal spans 28-152 (LRAMLKAEET…LLVNKLKWNL (125 aa)). The tract at residues 264–295 (QQSLDPKAAEEEEEEEEADLACTPTDVRDVNI) is disordered. Residue Lys270 forms a Glycyl lysine isopeptide (Lys-Gly) (interchain with G-Cter in ubiquitin) linkage. The span at 273–282 (EEEEEEEEAD) shows a compositional bias: acidic residues. The residue at position 286 (Thr286) is a Phosphothreonine.

It belongs to the cyclin family. Cyclin D subfamily. Interacts with either CDK4 or CDK6 protein kinase to form a serine/threonine kinase holoenzyme complex. The cyclin subunit imparts substrate specificity to the complex. Component of the ternary complex CCND1/CDK4/CDKN1B required for nuclear translocation and modulation of CDK4-mediated kinase activity. Interacts directly with CDKN1B. Can form similar complexes with either CDKN1A or CDKN2A. Interacts with UHRF2; the interaction ubiquitinates CCND1 and appears to occur independently of phosphorylation. Interacts with USP2. Interacts (via cyclin N-terminal domain) with INSM1 (via N-terminal region); the interaction competes with the binding of CCND1 to CDK4 during cell cycle progression and inhibits CDK4 activity. Interacts with CDK4; the interaction is prevented with the binding of CCND1 to INSM1 during cell cycle progression. Phosphorylation at Thr-286 by MAP kinases is required for ubiquitination and degradation by the DCX(AMBRA1) complex. It also plays an essential role for recognition by the FBXO31 component of SCF (SKP1-cullin-F-box) protein ligase complex following DNA damage. In terms of processing, ubiquitinated at Lys-270 by the DCX(AMBRA1) complex during the transition from G1 to S cell phase, leading to its degradation: ubiquitination is dependent on Thr-286 phosphorylation. The DCX(AMBRA1) complex represents the major regulator of CCND1 stability during the G1/S transition. Also ubiquitinated by the SCF(FBXO4) and Cul7-RING(FBXW8) ubiquitin-protein ligase complexes. Following DNA damage it is ubiquitinated by the SCF(FBXO31) protein ligase complex. SCF(FBXO31) ubiquitination is dependent on Thr-286 phosphorylation. Ubiquitinated also by UHRF2 apparently in a phosphorylation-independent manner. Ubiquitination leads to its degradation and G1 arrest. Deubiquitinated by USP2; leading to its stabilization.

It localises to the nucleus. It is found in the cytoplasm. Its subcellular location is the nucleus membrane. In terms of biological role, regulatory component of the cyclin D1-CDK4 (DC) complex that phosphorylates and inhibits members of the retinoblastoma (RB) protein family including RB1 and regulates the cell-cycle during G(1)/S transition. Phosphorylation of RB1 allows dissociation of the transcription factor E2F from the RB/E2F complex and the subsequent transcription of E2F target genes which are responsible for the progression through the G(1) phase. Hypophosphorylates RB1 in early G(1) phase. Cyclin D-CDK4 complexes are major integrators of various mitogenenic and antimitogenic signals. Also a substrate for SMAD3, phosphorylating SMAD3 in a cell-cycle-dependent manner and repressing its transcriptional activity. Component of the ternary complex, cyclin D1/CDK4/CDKN1B, required for nuclear translocation and activity of the cyclin D-CDK4 complex. Exhibits transcriptional corepressor activity with INSM1 on the NEUROD1 and INS promoters in a cell cycle-independent manner. The polypeptide is G1/S-specific cyclin-D1 (CCND1) (Canis lupus familiaris (Dog)).